Here is a 304-residue protein sequence, read N- to C-terminus: UDP-3-O-acyl-N-acetylglucosamine deacetylase (304 aa).

Zn(2+)-binding residues include H78, H237, and D241. Residue H264 is the Proton donor of the active site.

This sequence belongs to the LpxC family. Zn(2+) is required as a cofactor.

It catalyses the reaction a UDP-3-O-[(3R)-3-hydroxyacyl]-N-acetyl-alpha-D-glucosamine + H2O = a UDP-3-O-[(3R)-3-hydroxyacyl]-alpha-D-glucosamine + acetate. The protein operates within glycolipid biosynthesis; lipid IV(A) biosynthesis; lipid IV(A) from (3R)-3-hydroxytetradecanoyl-[acyl-carrier-protein] and UDP-N-acetyl-alpha-D-glucosamine: step 2/6. Catalyzes the hydrolysis of UDP-3-O-myristoyl-N-acetylglucosamine to form UDP-3-O-myristoylglucosamine and acetate, the committed step in lipid A biosynthesis. The polypeptide is UDP-3-O-acyl-N-acetylglucosamine deacetylase (Acidithiobacillus ferrooxidans (strain ATCC 53993 / BNL-5-31) (Leptospirillum ferrooxidans (ATCC 53993))).